The following is a 337-amino-acid chain: Phosphate acyltransferase (337 aa).

It belongs to the PlsX family. In terms of assembly, homodimer. Probably interacts with PlsY.

It is found in the cytoplasm. It carries out the reaction a fatty acyl-[ACP] + phosphate = an acyl phosphate + holo-[ACP]. Its pathway is lipid metabolism; phospholipid metabolism. Its function is as follows. Catalyzes the reversible formation of acyl-phosphate (acyl-PO(4)) from acyl-[acyl-carrier-protein] (acyl-ACP). This enzyme utilizes acyl-ACP as fatty acyl donor, but not acyl-CoA. The polypeptide is Phosphate acyltransferase (Acidobacterium capsulatum (strain ATCC 51196 / DSM 11244 / BCRC 80197 / JCM 7670 / NBRC 15755 / NCIMB 13165 / 161)).